The chain runs to 246 residues: N-alpha-acetyltransferase 11 (246 aa).

Residues 1 to 58 (MNIRNARPEDLMNMQHCNLLCLPENYQMKYYFYHGLSWPQLSYIAEDEDGKIVGYVLA) form an interaction with NAA15 region. Residues 1–152 (MNIRNARPED…DAYAMKRDLA (152 aa)) enclose the N-acetyltransferase domain. The segment at 175 to 246 (EENQEAQDST…DSSEYLDSTS (72 aa)) is disordered. Residues 230 to 246 (SHSTDVQDSSEYLDSTS) are compositionally biased toward polar residues.

Belongs to the acetyltransferase family. ARD1 subfamily. In terms of assembly, component of the N-terminal acetyltransferase A (NatA) complex composed of NAA11 and NAA15. Interacts with HIF1A.

The protein resides in the cytoplasm. The protein localises to the nucleus. The catalysed reaction is N-terminal glycyl-[protein] + acetyl-CoA = N-terminal N(alpha)-acetylglycyl-[protein] + CoA + H(+). It catalyses the reaction N-terminal L-alanyl-[protein] + acetyl-CoA = N-terminal N(alpha)-acetyl-L-alanyl-[protein] + CoA + H(+). It carries out the reaction N-terminal L-seryl-[protein] + acetyl-CoA = N-terminal N(alpha)-acetyl-L-seryl-[protein] + CoA + H(+). The enzyme catalyses N-terminal L-valyl-[protein] + acetyl-CoA = N-terminal N(alpha)-acetyl-L-valyl-[protein] + CoA + H(+). The catalysed reaction is N-terminal L-cysteinyl-[protein] + acetyl-CoA = N-terminal N(alpha)-acetyl-L-cysteinyl-[protein] + CoA + H(+). It catalyses the reaction N-terminal L-threonyl-[protein] + acetyl-CoA = N-terminal N(alpha)-acetyl-L-threonyl-[protein] + CoA + H(+). Displays alpha (N-terminal) acetyltransferase activity. Proposed alternative catalytic subunit of the N-terminal acetyltransferase A (NatA) complex. This Rattus norvegicus (Rat) protein is N-alpha-acetyltransferase 11 (Naa11).